A 469-amino-acid chain; its full sequence is ATP synthase subunit beta (469 aa).

Residue 156 to 163 (GGAGVGKT) participates in ATP binding.

Belongs to the ATPase alpha/beta chains family. F-type ATPases have 2 components, CF(1) - the catalytic core - and CF(0) - the membrane proton channel. CF(1) has five subunits: alpha(3), beta(3), gamma(1), delta(1), epsilon(1). CF(0) has three main subunits: a(1), b(2) and c(9-12). The alpha and beta chains form an alternating ring which encloses part of the gamma chain. CF(1) is attached to CF(0) by a central stalk formed by the gamma and epsilon chains, while a peripheral stalk is formed by the delta and b chains.

Its subcellular location is the cell membrane. It catalyses the reaction ATP + H2O + 4 H(+)(in) = ADP + phosphate + 5 H(+)(out). Functionally, produces ATP from ADP in the presence of a proton gradient across the membrane. The catalytic sites are hosted primarily by the beta subunits. The chain is ATP synthase subunit beta from Lactococcus lactis subsp. cremoris (strain MG1363).